Consider the following 131-residue polypeptide: Large ribosomal subunit protein bL19 (131 aa).

The protein belongs to the bacterial ribosomal protein bL19 family.

This protein is located at the 30S-50S ribosomal subunit interface and may play a role in the structure and function of the aminoacyl-tRNA binding site. This is Large ribosomal subunit protein bL19 from Rhodopseudomonas palustris (strain BisB18).